The sequence spans 427 residues: Tol-Pal system protein TolB (427 aa).

An N-terminal signal peptide occupies residues 1 to 23 (MKLLKRLVSVFAIVLAVGSNAFA).

This sequence belongs to the TolB family. In terms of assembly, the Tol-Pal system is composed of five core proteins: the inner membrane proteins TolA, TolQ and TolR, the periplasmic protein TolB and the outer membrane protein Pal. They form a network linking the inner and outer membranes and the peptidoglycan layer.

The protein resides in the periplasm. In terms of biological role, part of the Tol-Pal system, which plays a role in outer membrane invagination during cell division and is important for maintaining outer membrane integrity. The polypeptide is Tol-Pal system protein TolB (Haemophilus influenzae (strain PittEE)).